The primary structure comprises 101 residues: Urease subunit beta (101 aa).

This sequence belongs to the urease beta subunit family. Heterotrimer of UreA (gamma), UreB (beta) and UreC (alpha) subunits. Three heterotrimers associate to form the active enzyme.

It localises to the cytoplasm. The catalysed reaction is urea + 2 H2O + H(+) = hydrogencarbonate + 2 NH4(+). It participates in nitrogen metabolism; urea degradation; CO(2) and NH(3) from urea (urease route): step 1/1. In Rhizobium leguminosarum bv. trifolii (strain WSM2304), this protein is Urease subunit beta.